The primary structure comprises 341 residues: Major histocompatibility complex class I-related protein 1 (341 aa).

The signal sequence occupies residues 1-22 (MGELMAFLLPLIIVLMVKHSDS). Residues 23–109 (RTHSLRYFRL…KRLQRHYNHS (87 aa)) are alpha-1. An antigen-binding cleft region spans residues 23–201 (RTHSLRYFRL…EYGKDTLQRT (179 aa)). The Extracellular segment spans residues 23 to 302 (RTHSLRYFRL…QESETIPLVM (280 aa)). Residues arginine 31, serine 46, and lysine 65 each coordinate 5-(2-oxoethylideneamino)-6-(D-ribitylamino)uracil. The 5-(2-oxopropylideneamino)-6-(D-ribitylamino)uracil site is built by arginine 31, serine 46, and lysine 65. Residues arginine 31, serine 46, and lysine 65 each coordinate 7-hydroxy-6-methyl-8-(1-D-ribityl)lumazine. Arginine 31 contacts 8-(9H-purin-6-yl)-2-oxa-8-azabicyclo[3.3.1]nona-3,6-diene-4,6-dicarbaldehyde. 8-(9H-purin-6-yl)-2-oxa-8-azabicyclo[3.3.1]nona-3,6-diene-4,6-dicarbaldehyde-binding residues include lysine 65 and histidine 80. Lysine 65 provides a ligand contact to 2-amino-4-oxopteridine-6-carbaldehyde. Residue lysine 65 participates in pyridoxal binding. N-linked (GlcNAc...) asparagine glycosylation is present at asparagine 107. Residues 110–201 (GSHTYQRMIG…EYGKDTLQRT (92 aa)) are alpha-2. 5-(2-oxoethylideneamino)-6-(D-ribitylamino)uracil contacts are provided by arginine 116, tyrosine 174, and glutamine 175. Positions 116, 174, and 175 each coordinate 5-(2-oxopropylideneamino)-6-(D-ribitylamino)uracil. 7-hydroxy-6-methyl-8-(1-D-ribityl)lumazine is bound by residues arginine 116, tyrosine 174, and glutamine 175. Arginine 116 contacts 8-(9H-purin-6-yl)-2-oxa-8-azabicyclo[3.3.1]nona-3,6-diene-4,6-dicarbaldehyde. 2 disulfide bridges follow: cysteine 120/cysteine 183 and cysteine 222/cysteine 278. Positions 202-293 (EPPLVRVNRK…GVHMVLQVPQ (92 aa)) are alpha-3. Residues 203–299 (PPLVRVNRKE…QVPQESETIP (97 aa)) enclose the Ig-like C1-type domain. Residues 294–302 (ESETIPLVM) form a connecting peptide region. A helical membrane pass occupies residues 303–323 (KAVSGSIVLVIVLAGVGVLVW). At 324 to 341 (RRRPREQNGAIYLPTPDR) the chain is on the cytoplasmic side.

Belongs to the MHC class I family. In terms of assembly, heterotrimer that consists of MR1, B2M and a metabolite antigen. Major classes of metabolite ligands presented by MR1 include riboflavin-related antigens, pyrimidines and ribityl lumazines, nucleobase adducts and folate derivatives. Forms reversible covalent Schiff base complexes with microbial pyrimidine-based metabolite, which serves as a molecular switch triggering complete folding, stable association with B2M and translocation of the ternary complex from endoplasmic reticulum to the plasma membrane. Alternatively, forms non-Schiff base complexes with ribityl lumazines. On antigen-presenting cells, the ternary complex interacts with TCR on MR1-restricted T cells, predominantly represented by CD8-positive and CD4- and CD8-double negative MAIT cell subsets. Interacts with TAPBP and TAPBPL chaperones in the endoplasmic reticulum. TAPBP associated or not with MHC class I peptide loading complex binds ligand-free MR1 or MR1-B2M complex, providing for stable MR1 pools ready for metabolite antigen processing. TAPBPL interacts with MR1 in a ligand-independent way; this interaction may stabilize MR1 pool and facilitate ligand loading and dissociation. MR1-B2M heterodimer adopts a topology similar to classical MHC class I molecules, with alpha-1 and alpha-2 domains of MR1 forming the antigen-binding cleft composed of two alpha-helices resting on a floor of 7-stranded anti-parallel beta-pleated sheet. The ribityl moiety of pyrimidine-based antigens is recognized by Tyr-95 residue in the CDR3 alpha loop of the invariant TRAV1-2 TCR. Homodimerizes and does not associate with B2M. N-glycosylated. In terms of tissue distribution, ubiquitous. Low expression is detected in peripheral blood B cells, T cells, monocytes and in bronchial epithelial cells (at protein level). Expressed in plasmablasts or plasma B cells in the lamina propria of ileum, appendix and colon (at protein level). Highly expressed on a subset of CD45-positive CD3-positive thymocytes (at protein level).

It localises to the cell membrane. Its subcellular location is the endoplasmic reticulum membrane. The protein localises to the golgi apparatus membrane. The protein resides in the early endosome membrane. It is found in the late endosome membrane. It localises to the secreted. With respect to regulation, inhibited by pterin-based metabolites such as 6-formylpterin (6-FP, a product of folic acid photodegradation). 6-FP competitively inhibits MAIT cell activation by 5-OP-RU. Modulated by commonly prescribed anti-inflammatory drug metabolites. Inhibited by salicilates such as 3-formylsalicylic and 5-formylsalicylic acids. Activated by diclofenac and/or its hydroxy metabolites. Its function is as follows. Antigen-presenting molecule specialized in displaying microbial pyrimidine-based metabolites to alpha-beta T cell receptors (TCR) on innate-type mucosal-associated invariant T (MAIT) cells. In complex with B2M preferentially presents riboflavin-derived metabolites to semi-invariant TRAV1.2 TCRs on MAIT cells, guiding immune surveillance of the microbial metabolome at mucosal epithelial barriers. Signature pyrimidine-based microbial antigens are generated via non-enzymatic condensation of metabolite intermediates of the riboflavin pathway with by-products arising from other metabolic pathways such as glycolysis. Typical potent antigenic metabolites are 5-(2-oxoethylideneamino)-6-D-ribitylaminouracil (5-OE-RU) and 5-(2-oxopropylideneamino)-6-D-ribitylaminouracil (5-OP-RU), products of condensation of 5-amino-6-D-ribityaminouracil (5-A-RU) with glyoxal or methylglyoxal by-products, respectively. May present microbial antigens to various TRAV1-2-negative MAIT cell subsets, providing for unique recognition of diverse microbes, including pathogens that do not synthesize riboflavin. Upon antigen recognition, elicits rapid innate-type MAIT cell activation to eliminate pathogenic microbes by directly killing infected cells. During T cell development, drives thymic selection and post-thymic terminal differentiation of MAIT cells in a process dependent on commensal microflora. Acts as an immune sensor of cancer cell metabolome. May present a tumor-specific or -associated metabolite essential for cancer cell survival to a 'pan-cancer' TCR consisting of TRAV38.2-DV8*TRAJ31 alpha chain paired with a TRBV25.1*TRBJ2.3 beta chain on a non-MAIT CD8-positive T cell clone (MC.7.G5), triggering T cell-mediated killing of a wide range of cancer cell types. Functionally, allele MR1*01: Presents microbial-derived metabolite 5-OP-RU to semi-invariant TRAV1.2-TRAJ33-TRBV6.1 (A-F7) TCR on MAIT cells. Presents nucleobase carbonyl adducts generated during oxidative stress. Captures M3Ade, a nucleobase adduct composed of one adenine modified by a malondialdehyde trimer, for recognition by MR1-restricted T cell clones expressing a polyclonal TCR repertoire. Displays moderate binding affinity toward tumor-enriched pyridoxal and pyridoxal 5'-phosphate antigens. Allele MR1*04: Presents tumor-enriched metabolite pyridoxal to pan-cancer 7.G5 TCR on T cells enabling preferential recognition of cancer cells. May act as an alloantigen. The sequence is that of Major histocompatibility complex class I-related protein 1 from Homo sapiens (Human).